The primary structure comprises 96 residues: Large ribosomal subunit protein bL27 (96 aa).

The tract at residues 13-33 (KGGGSTANGRNSAGRRLGAKA) is disordered.

The protein belongs to the bacterial ribosomal protein bL27 family.

The chain is Large ribosomal subunit protein bL27 from Lactobacillus acidophilus (strain ATCC 700396 / NCK56 / N2 / NCFM).